A 992-amino-acid chain; its full sequence is Aminopeptidase Q (992 aa).

At 2–13 the chain is on the cytoplasmic side; sequence GPPSSSGFYVSR. The chain crosses the membrane as a helical; Signal-anchor for type II membrane protein span at residues 14–34; sequence AVALLLAALAAALLLALAVLA. The Extracellular segment spans residues 35–992; that stretch reads ALYGRCARVQ…RMTAWLRKNT (958 aa). Residues 47 to 92 form a disordered region; it reads DLHHSGVPDAASSPRGTQEEPLPTWPPRPTREPAGTATPGHWRPPG. Residue Asn-133 is glycosylated (N-linked (GlcNAc...) asparagine). Glu-241 lines the substrate pocket. N-linked (GlcNAc...) asparagine glycosylation is found at Asn-262, Asn-289, Asn-347, and Asn-361. Residue 380–384 participates in substrate binding; sequence SAMEN. His-416 is a binding site for Zn(2+). The active-site Proton acceptor is Glu-417. The Zn(2+) site is built by His-420 and Glu-439. Tyr-505 (proton donor) is an active-site residue. N-linked (GlcNAc...) asparagine glycosylation is found at Asn-555, Asn-584, Asn-602, Asn-609, Asn-655, Asn-811, Asn-850, and Asn-889.

This sequence belongs to the peptidase M1 family. It depends on Zn(2+) as a cofactor. In terms of tissue distribution, expressed in skin. Expression levels do not differ between dark and light skin areas.

The protein localises to the membrane. Functionally, metalloprotease which may be important for placentation by regulating biological activity of key peptides at the embryo-maternal interface. Involved in coat pigmentation patterns. During skin development, may be required to establish the periodicity of tabby markings, initiating a pre-pattern at or before hair follicle development. This Felis catus (Cat) protein is Aminopeptidase Q (LVRN).